Reading from the N-terminus, the 133-residue chain is Protein U17 (133 aa).

The chain crosses the membrane as a helical span at residues 82–102 (FVSVLWCVILVFVVKIKLFFL).

The protein resides in the membrane. The sequence is that of Protein U17 (U17/U16) from Homo sapiens (Human).